Reading from the N-terminus, the 501-residue chain is Serine/threonine-protein kinase pelle (501 aa).

Residues 1–25 (MSGVQTAEAEAQAQNQANGNRTRSR) form a disordered region. Over residues 7-18 (AEAEAQAQNQAN) the composition is skewed to low complexity. The Death domain occupies 55-121 (WQQLATAVKL…NAMRLIKDYV (67 aa)). The segment at 144–176 (DSSAKVNNGPPFPSSSGVSNSNNNRTSTTATEE) is disordered. Over residues 149-167 (VNNGPPFPSSSGVSNSNNN) the composition is skewed to low complexity. A Protein kinase domain is found at 213 to 499 (WSPDNRLGQG…AVLKRFEPFV (287 aa)). Residues 219 to 227 (LGQGGFGDV) and Lys-240 each bind ATP. Asp-346 serves as the catalytic Proton acceptor. Residues 348 to 351 (KPAN) and Asp-364 contribute to the ATP site.

It belongs to the protein kinase superfamily. TKL Ser/Thr protein kinase family. Pelle subfamily. As to quaternary structure, interacts (via Death domain) with tub (via Death domain). Interacts with Pellino (Pli).

Its subcellular location is the cell membrane. It localises to the cytoplasm. The catalysed reaction is L-seryl-[protein] + ATP = O-phospho-L-seryl-[protein] + ADP + H(+). It carries out the reaction L-threonyl-[protein] + ATP = O-phospho-L-threonyl-[protein] + ADP + H(+). Plays an essential role in the Tl receptor signaling pathway that establishes embryonic dorsoventral polarity; the signal directs import of dl into ventral and ventrolateral nuclei, thereby establishing dorsoventral polarity. Tub recruits pll to the plasma membrane and protein-protein interaction activates pll. This Drosophila melanogaster (Fruit fly) protein is Serine/threonine-protein kinase pelle (pll).